The sequence spans 433 residues: 23S rRNA (uracil(1939)-C(5))-methyltransferase RlmD (433 aa).

In terms of domain architecture, TRAM spans 10–68 (RTTTRQIITVSVNDLDSFGQGVARHNGKTLFIPGLLSQENAEVTVTEDKKQYARAKVVR). The [4Fe-4S] cluster site is built by C81, C87, C90, and C162. S-adenosyl-L-methionine contacts are provided by Q265, F294, N299, E315, N342, and D363. C389 functions as the Nucleophile in the catalytic mechanism.

The protein belongs to the class I-like SAM-binding methyltransferase superfamily. RNA M5U methyltransferase family. RlmD subfamily.

It catalyses the reaction uridine(1939) in 23S rRNA + S-adenosyl-L-methionine = 5-methyluridine(1939) in 23S rRNA + S-adenosyl-L-homocysteine + H(+). In terms of biological role, catalyzes the formation of 5-methyl-uridine at position 1939 (m5U1939) in 23S rRNA. The polypeptide is 23S rRNA (uracil(1939)-C(5))-methyltransferase RlmD (Shigella dysenteriae serotype 1 (strain Sd197)).